The chain runs to 343 residues: Phosphoribosylformylglycinamidine cyclo-ligase (343 aa).

It belongs to the AIR synthase family.

Its subcellular location is the cytoplasm. It catalyses the reaction 2-formamido-N(1)-(5-O-phospho-beta-D-ribosyl)acetamidine + ATP = 5-amino-1-(5-phospho-beta-D-ribosyl)imidazole + ADP + phosphate + H(+). It functions in the pathway purine metabolism; IMP biosynthesis via de novo pathway; 5-amino-1-(5-phospho-D-ribosyl)imidazole from N(2)-formyl-N(1)-(5-phospho-D-ribosyl)glycinamide: step 2/2. This is Phosphoribosylformylglycinamidine cyclo-ligase from Enterococcus faecalis (strain ATCC 700802 / V583).